Reading from the N-terminus, the 165-residue chain is DELTA-actitoxin-Oor1a (165 aa).

Residues 1–17 (ATFRVLAKVLAELGKVS) are N-terminal region. 5 residues coordinate phosphocholine: S41, V74, S92, P94, and Y125. Residues 92-107 (SVPYDYNLYSNWWNVK) form a trp-rich region, which is important for the binding to lipid membrane region.

The protein belongs to the actinoporin family. Sea anemone subfamily. As to quaternary structure, octamer or nonamer in membranes. Monomer in the soluble state.

It localises to the secreted. The protein resides in the nematocyst. Its subcellular location is the target cell membrane. Functionally, pore-forming protein that forms cations-selective hydrophilic pores of around 1 nm and causes cardiac stimulation and cytolysis. Pore formation is a multi-step process that involves specific recognition of membrane sphingomyelin (but neither cholesterol nor phosphatidylcholine) using aromatic rich region and adjacent phosphocholine (POC) binding site, firm binding to the membrane (mainly driven by hydrophobic interactions) accompanied by the transfer of the N-terminal region to the lipid-water interface and finally pore formation after oligomerization of monomers. Cytolytic effects include red blood cells hemolysis, platelet aggregation and lysis, cytotoxic and cytostatic effects on fibroblasts. Lethality in mammals has been ascribed to severe vasospasm of coronary vessels, cardiac arrhythmia, and inotropic effects. This is DELTA-actitoxin-Oor1a from Oulactis orientalis (Japan anemone).